The following is a 105-amino-acid chain: Insulin (105 aa).

Residues 1-22 (MAFWLQAASLLVLLALSPGVDA) form the signal peptide. Disulfide bonds link Cys29-Cys91, Cys41-Cys104, and Cys90-Cys95. The propeptide at 53–82 (DVDPLIGFLSPKSAKENEEYPFKDQTEMMV) is c peptide.

The protein belongs to the insulin family. As to quaternary structure, heterodimer of a B chain and an A chain linked by two disulfide bonds.

The protein localises to the secreted. Its function is as follows. Insulin decreases blood glucose concentration. It increases cell permeability to monosaccharides, amino acids and fatty acids. It accelerates glycolysis, the pentose phosphate cycle, and glycogen synthesis in liver. In Oncorhynchus keta (Chum salmon), this protein is Insulin (ins).